Reading from the N-terminus, the 274-residue chain is Large ribosomal subunit protein uL2cz/uL2cy (274 aa).

A disordered region spans residues 225–274; the sequence is PVDHPHGGGEGRAPIGRKKPVTPWGYPALGRRSRKRKKYSDNLILRRRTK.

The protein belongs to the universal ribosomal protein uL2 family. In terms of assembly, part of the 50S ribosomal subunit.

The protein resides in the plastid. Its subcellular location is the chloroplast. The sequence is that of Large ribosomal subunit protein uL2cz/uL2cy (rpl2-A) from Lotus japonicus (Lotus corniculatus var. japonicus).